The sequence spans 234 residues: Enterobactin synthase component D (234 aa).

Mg(2+) is bound by residues Asp-107, Glu-109, and Glu-152.

This sequence belongs to the P-Pant transferase superfamily. EntD family. EntB, EntD, EntE, and EntF form a multienzyme complex called enterobactin synthase. Requires Mg(2+) as cofactor.

The protein resides in the membrane. It carries out the reaction apo-[aryl-carrier protein] + CoA = holo-[aryl-carrier protein] + adenosine 3',5'-bisphosphate + H(+). The catalysed reaction is apo-[peptidyl-carrier protein] + CoA = holo-[peptidyl-carrier protein] + adenosine 3',5'-bisphosphate + H(+). It functions in the pathway siderophore biosynthesis; enterobactin biosynthesis. Its function is as follows. Involved in the biosynthesis of the siderophore enterobactin (enterochelin), which is a macrocyclic trimeric lactone of N-(2,3-dihydroxybenzoyl)-serine. The serine trilactone serves as a scaffolding for the three catechol functionalities that provide hexadentate coordination for the tightly ligated iron(2+) atoms. Plays an essential role in the assembly of the enterobactin by catalyzing the transfer of the 4'-phosphopantetheine (Ppant) moiety from coenzyme A to the apo-domains of both EntB (ArCP domain) and EntF (PCP domain) to yield their holo-forms which make them competent for the activation of 2,3-dihydroxybenzoate (DHB) and L-serine, respectively. The sequence is that of Enterobactin synthase component D from Salmonella typhimurium (strain LT2 / SGSC1412 / ATCC 700720).